Consider the following 163-residue polypeptide: Transcriptional repressor NrdR (163 aa).

A zinc finger spans residues 3 to 34 (CPKCNYLKSSVVDSRQAEEGNTIRRRRECENC). Positions 49–139 (LLVVKKDGTR…VYRSFKDVDE (91 aa)) constitute an ATP-cone domain.

It belongs to the NrdR family. Zn(2+) is required as a cofactor.

Negatively regulates transcription of bacterial ribonucleotide reductase nrd genes and operons by binding to NrdR-boxes. This chain is Transcriptional repressor NrdR, found in Streptococcus mutans serotype c (strain ATCC 700610 / UA159).